The sequence spans 384 residues: 8-amino-7-oxononanoate synthase (384 aa).

Arg-21 lines the substrate pocket. A pyridoxal 5'-phosphate-binding site is contributed by 108 to 109 (GF). Position 133 (His-133) interacts with substrate. Residues Ser-179, His-207, and Thr-233 each contribute to the pyridoxal 5'-phosphate site. Lys-236 bears the N6-(pyridoxal phosphate)lysine mark. Position 352 (Thr-352) interacts with substrate.

This sequence belongs to the class-II pyridoxal-phosphate-dependent aminotransferase family. BioF subfamily. In terms of assembly, homodimer. The cofactor is pyridoxal 5'-phosphate.

It carries out the reaction 6-carboxyhexanoyl-[ACP] + L-alanine + H(+) = (8S)-8-amino-7-oxononanoate + holo-[ACP] + CO2. The protein operates within cofactor biosynthesis; biotin biosynthesis. Catalyzes the decarboxylative condensation of pimeloyl-[acyl-carrier protein] and L-alanine to produce 8-amino-7-oxononanoate (AON), [acyl-carrier protein], and carbon dioxide. This Escherichia coli O8 (strain IAI1) protein is 8-amino-7-oxononanoate synthase.